Reading from the N-terminus, the 516-residue chain is (R)-citramalate synthase CimA (516 aa).

The Pyruvate carboxyltransferase domain maps to 8-269 (LEILDVTLRD…KTNINEIAIT (262 aa)). Catalysis depends on arginine 16, which acts as the Proton donor. Residues 16-17 (RD) and tyrosine 144 each bind pyruvate. Residue aspartate 17 participates in Mn(2+) binding. The Proton acceptor role is filled by glutamate 146. Threonine 179 is a pyruvate binding site. Positions 207 and 209 each coordinate Mn(2+).

Belongs to the alpha-IPM synthase/homocitrate synthase family. Homodimer. Mn(2+) is required as a cofactor.

It catalyses the reaction pyruvate + acetyl-CoA + H2O = (3R)-citramalate + CoA + H(+). Its pathway is amino-acid biosynthesis; L-isoleucine biosynthesis; 2-oxobutanoate from pyruvate: step 1/3. With respect to regulation, regulated by the end-product isoleucine via a feedback inhibition. The binding of isoleucine has inhibitory effects on the binding of both pyruvate and acetyl-CoA. May act via conformational change of the dimer interface of the regulatory domain, leading to inhibition of the catalytic reaction. Its function is as follows. Catalyzes the condensation of pyruvate and acetyl-coenzyme A to form (R)-citramalate. Shows strict substrate specificity for pyruvate. Cannot use alpha-ketoisovalerate, alpha-ketobutyrate, alpha-ketoisocaproate, alpha-ketoglutarate or glyoxylate. This is (R)-citramalate synthase CimA from Leptospira interrogans serogroup Icterohaemorrhagiae serovar Lai (strain 56601).